Consider the following 204-residue polypeptide: Prephenate decarboxylase (204 aa).

The protein belongs to the prephenate decarboxylase family.

Its subcellular location is the cytoplasm. It carries out the reaction prephenate + H(+) = 3-[(4R)-4-hydroxycyclohexa-1,5-dien-1-yl]-2-oxopropanoate + CO2. The protein operates within antibiotic biosynthesis; bacilysin biosynthesis. Functionally, part of the bacABCDEF operon responsible for the biosynthesis of the nonribosomally synthesized dipeptide antibiotic bacilysin, composed of L-alanine and L-anticapsin. Bacilysin is an irreversible inactivator of the glutaminase domain of glucosamine synthetase. BacA is an unusual prephenate decarboxylase that avoids the typical aromatization of the cyclohexadienol ring of prephenate. BacA catalyzes the protonation of prephenate (1-carboxy-4-hydroxy-alpha-oxo-2,5-cyclohexadiene-1-propanoic acid) at C6 position, followed by a decarboxylation to produce the endocyclic-delta(4),delta(8)-7R-dihydro-hydroxyphenylpyruvate (en-H2HPP). En-H2HPP is able to undergo a slow nonenzymatic isomerization to produce the exocyclic-delta(3),delta(5)-dihydro-hydroxyphenylpyruvate (ex-H2HPP). BacA isomerizes only the pro-R double bond in prephenate. The polypeptide is Prephenate decarboxylase (Bacillus amyloliquefaciens (Bacillus velezensis)).